We begin with the raw amino-acid sequence, 325 residues long: Phospho-N-acetylmuramoyl-pentapeptide-transferase (325 aa).

A run of 10 helical transmembrane segments spans residues Leu3 to Ile23, Gly48 to Val68, Ala79 to Ile99, Leu106 to Ala126, Ile136 to Ile156, Gly174 to Thr194, Leu199 to Tyr219, Val223 to Met243, Leu246 to Leu266, and Ile298 to Ile318.

This sequence belongs to the glycosyltransferase 4 family. MraY subfamily. Mg(2+) is required as a cofactor.

Its subcellular location is the cell membrane. The catalysed reaction is UDP-N-acetyl-alpha-D-muramoyl-L-alanyl-gamma-D-glutamyl-meso-2,6-diaminopimeloyl-D-alanyl-D-alanine + di-trans,octa-cis-undecaprenyl phosphate = di-trans,octa-cis-undecaprenyl diphospho-N-acetyl-alpha-D-muramoyl-L-alanyl-D-glutamyl-meso-2,6-diaminopimeloyl-D-alanyl-D-alanine + UMP. Its pathway is cell wall biogenesis; peptidoglycan biosynthesis. Functionally, catalyzes the initial step of the lipid cycle reactions in the biosynthesis of the cell wall peptidoglycan: transfers peptidoglycan precursor phospho-MurNAc-pentapeptide from UDP-MurNAc-pentapeptide onto the lipid carrier undecaprenyl phosphate, yielding undecaprenyl-pyrophosphoryl-MurNAc-pentapeptide, known as lipid I. The chain is Phospho-N-acetylmuramoyl-pentapeptide-transferase from Clostridium novyi (strain NT).